The sequence spans 483 residues: Cysteine proteinase 1, mitochondrial (483 aa).

The N-terminal 30 residues, 1-30, are a transit peptide targeting the mitochondrion; the sequence is MLPTSVSRSLYLKTFRSHLLRAPQIVLKRM. Catalysis depends on residues Cys-102, His-398, and Asn-421. Position 483 (Lys-483) is a propeptide, removed in mature form; by autocatalysis.

This sequence belongs to the peptidase C1 family. In terms of assembly, homohexamer. Binds to nucleic acids. Binds single-stranded DNA and RNA with higher affinity than double-stranded DNA. Post-translationally, the N-terminus of isoform Cytoplasmic is blocked.

The protein localises to the mitochondrion. It is found in the cytoplasm. It catalyses the reaction Inactivates bleomycin B2 (a cytotoxic glycometallopeptide) by hydrolysis of a carboxyamide bond of beta-aminoalanine, but also shows general aminopeptidase activity. The specificity varies somewhat with source, but amino acid arylamides of Met, Leu and Ala are preferred.. With respect to regulation, inhibited by E64, a specific inhibitor of cysteine proteases, N-ethylmaleimide, iodacetamide, and mercury and zinc ions. In terms of biological role, the normal physiological role of the enzyme is unknown, but it is not essential for the viability of yeast cells. Has aminopeptidase activity, shortening substrate peptides sequentially by 1 amino acid. Has bleomycin hydrolase activity, which can protect the cell from the toxic effects of bleomycin. Has homocysteine-thiolactonase activity, protecting the cell against homocysteine toxicity. Acts as a repressor in the GAL4 regulatory system, but this does not require either the peptidase or nucleic acid-binding activities. The chain is Cysteine proteinase 1, mitochondrial (LAP3) from Saccharomyces cerevisiae (strain AWRI1631) (Baker's yeast).